A 91-amino-acid polypeptide reads, in one-letter code: Long neurotoxin LNTX28 (91 aa).

Residues 1–21 (MKTLLLTLVVMTIVCLDLGYT) form the signal peptide. 5 disulfide bridges follow: cysteine 24–cysteine 41, cysteine 34–cysteine 62, cysteine 47–cysteine 51, cysteine 66–cysteine 77, and cysteine 78–cysteine 83.

It belongs to the three-finger toxin family. Long-chain subfamily. Type II alpha-neurotoxin sub-subfamily. In terms of tissue distribution, expressed by the venom gland.

It localises to the secreted. Binds with high affinity to muscular (alpha-1/CHRNA1) and neuronal (alpha-7/CHRNA7) nicotinic acetylcholine receptor (nAChR) and inhibits acetylcholine from binding to the receptor, thereby impairing neuromuscular and neuronal transmission. The sequence is that of Long neurotoxin LNTX28 from Ophiophagus hannah (King cobra).